Reading from the N-terminus, the 122-residue chain is Large ribosomal subunit protein bL12 (122 aa).

The protein belongs to the bacterial ribosomal protein bL12 family. Homodimer. Part of the ribosomal stalk of the 50S ribosomal subunit. Forms a multimeric L10(L12)X complex, where L10 forms an elongated spine to which 2 to 4 L12 dimers bind in a sequential fashion. Binds GTP-bound translation factors.

Forms part of the ribosomal stalk which helps the ribosome interact with GTP-bound translation factors. Is thus essential for accurate translation. The sequence is that of Large ribosomal subunit protein bL12 from Shewanella loihica (strain ATCC BAA-1088 / PV-4).